We begin with the raw amino-acid sequence, 250 residues long: HTH-type transcriptional regulator KipR (250 aa).

The HTH iclR-type domain occupies 5 to 65 (NKTVVKSMAL…DASGAYSLGL (61 aa)). The H-T-H motif DNA-binding region spans 26–45 (LSELVSLTGMPKTSVHRMVS). The IclR-ED domain occupies 80-249 (IRKIAKPVME…ALQISRKIGY (170 aa)).

Transcriptional repressor of the kip gene-containing operon. The sequence is that of HTH-type transcriptional regulator KipR (kipR) from Bacillus subtilis (strain 168).